The chain runs to 217 residues: Large ribosomal subunit protein uL1 (217 aa).

The residue at position 122 (Lys-122) is an N6,N6-dimethyllysine; alternate. Lys-122 is subject to N6-methyllysine; alternate.

It belongs to the universal ribosomal protein uL1 family.

The protein is Large ribosomal subunit protein uL1 (rpl10a) of Dictyostelium discoideum (Social amoeba).